The following is a 975-amino-acid chain: E3 ubiquitin-protein ligase BRE1A (975 aa).

A disordered region spans residues 1-30; sequence MSGIGNKRAAGEPGTSMPPEKKAAVEDSGT. An N6-acetyllysine modification is found at Lys21. Phosphoserine is present on Ser41. Residues 43–90 are a coiled coil; it reads TEELDIRTLQTKNRKLAEMLDQRQAIEDELREHIEKLERRQATDDASL. A disordered region spans residues 125 to 155; it reads KALVVPEPEPDSDSNQERKDDRERGEGQEPA. 2 positions are modified to phosphoserine: Ser136 and Ser138. Residues 139–151 show a composition bias toward basic and acidic residues; sequence NQERKDDRERGEG. 2 coiled-coil regions span residues 168–375 and 429–898; these read EEME…EQVV and SLHK…TTKK. An N6-acetyllysine mark is found at Lys348 and Lys510. The segment at 507-622 is disordered; the sequence is DLNKTRLRSG…GKHDDGRKKE (116 aa). Phosphoserine is present on Ser522. Residues 527–540 show a composition bias toward basic and acidic residues; sequence EDPKDEPAELKPDS. Positions 543–552 are enriched in low complexity; the sequence is LSSQSSASKA. Residues 558–622 are compositionally biased toward basic and acidic residues; sequence NEIKSKRDEE…GKHDDGRKKE (65 aa). Phosphoserine is present on Ser562. Residues 922-961 form an RING-type zinc finger; the sequence is CPCCNMRKKDAVLTKCFHVFCFECVKTRYDTRQRKCPKCN.

This sequence belongs to the BRE1 family. Component of the RNF20/40 complex (also known as BRE1 complex) probably composed of 2 copies of RNF20/BRE1A and 2 copies of RNF40/BRE1B. Interacts with UBE2E1/UBCH6. Interacts with p53/TP53 and WAC. Interacts with PAF1; the interaction mediates the association of the PAF1 and RNF20/40 complexes which is a prerequsite for recruitment of UBE2A/B. Interacts with isoform 1 and isoform 2 of PA2G4. Interacts with FBXL19. In terms of assembly, (Microbial infection) Interacts with human herpesvirus 8 (KSHV) protein RTA/ORF50; this interaction targets the SMC5-SMC6 complex for proteasomal degradation. Expressed in the normal brain and also in malignant gliomas (at protein level).

Its subcellular location is the nucleus. The enzyme catalyses S-ubiquitinyl-[E2 ubiquitin-conjugating enzyme]-L-cysteine + [acceptor protein]-L-lysine = [E2 ubiquitin-conjugating enzyme]-L-cysteine + N(6)-ubiquitinyl-[acceptor protein]-L-lysine.. Its pathway is protein modification; protein ubiquitination. Component of the RNF20/40 E3 ubiquitin-protein ligase complex that mediates monoubiquitination of 'Lys-120' of histone H2B (H2BK120ub1). H2BK120ub1 gives a specific tag for epigenetic transcriptional activation and is also prerequisite for histone H3 'Lys-4' and 'Lys-79' methylation (H3K4me and H3K79me, respectively). It thereby plays a central role inb histone code and gene regulation. The RNF20/40 complex forms a H2B ubiquitin ligase complex in cooperation with the E2 enzyme UBE2A or UBE2B; reports about the cooperation with UBE2E1/UBCH are contradictory. Required for transcriptional activation of Hox genes. Recruited to the MDM2 promoter, probably by being recruited by p53/TP53, and thereby acts as a transcriptional coactivator. Mediates the polyubiquitination of isoform 2 of PA2G4 in cancer cells leading to its proteasome-mediated degradation. Its function is as follows. (Microbial infection) Promotes the human herpesvirus 8 (KSHV) lytic cycle by inducing the expression of lytic viral genes including the latency switch gene RTA/ORF50. In Homo sapiens (Human), this protein is E3 ubiquitin-protein ligase BRE1A (RNF20).